The primary structure comprises 124 residues: Small ribosomal subunit protein uS11 (124 aa).

Belongs to the universal ribosomal protein uS11 family. As to quaternary structure, part of the 30S ribosomal subunit. Interacts with proteins S7 and S18. Binds to IF-3.

Functionally, located on the platform of the 30S subunit, it bridges several disparate RNA helices of the 16S rRNA. Forms part of the Shine-Dalgarno cleft in the 70S ribosome. In Anaplasma phagocytophilum (strain HZ), this protein is Small ribosomal subunit protein uS11.